A 141-amino-acid chain; its full sequence is Nucleoside triphosphatase NudI (141 aa).

One can recognise a Nudix hydrolase domain in the interval 1 to 141 (MRQRTIVCPI…RLTFTQKGLL (141 aa)). The Nudix box motif lies at 38–59 (GGMEPGETMEEALRREIREELG).

The protein belongs to the Nudix hydrolase family. NudI subfamily. In terms of assembly, monomer. The cofactor is Mg(2+).

The enzyme catalyses a ribonucleoside 5'-triphosphate + H2O = a ribonucleoside 5'-phosphate + diphosphate + H(+). It carries out the reaction a 2'-deoxyribonucleoside 5'-triphosphate + H2O = a 2'-deoxyribonucleoside 5'-phosphate + diphosphate + H(+). It catalyses the reaction dUTP + H2O = dUMP + diphosphate + H(+). The catalysed reaction is dTTP + H2O = dTMP + diphosphate + H(+). The enzyme catalyses dCTP + H2O = dCMP + diphosphate + H(+). Functionally, catalyzes the hydrolysis of nucleoside triphosphates, with a preference for pyrimidine deoxynucleoside triphosphates (dUTP, dTTP and dCTP). This chain is Nucleoside triphosphatase NudI, found in Enterobacter sp. (strain 638).